The following is a 433-amino-acid chain: MQRMIQQFAAEYTSKNSSTQDPSQPNSTKNQSLPKASPVTTSPTAATTQNPVLSKLLMADQDSPLDLTVRKSQSEPSEQDGVLDLSTKKSPCAGSTSLSHSPGCSSTQGNGRPGRPSQYRPDGLRSGDGVPPRSLQDGTREGFGHSTSLKVPLARSLQISEELLSRNQLSTAASLGPSGLQNHGQHLILSREASWAKPHYEFNLSRMKFRGNGALSNISDLPFLAENSAFPKMALQAKQDGKKDVSHSSPVDLKIPQVRGMDLSWESRTGDQYSYSSLVMGSQTESALSKKLRAILPKQSRKSMLDAGPDSWGSDAEQSTSGQPYPTSDQEGDPGSKQPRKKRGRYRQYNSEILEEAISVVMSGKMSVSKAQSIYGIPHSTLEYKVKERLGTLKNPPKKKMKLMRSEGPDVSVKIELDPQGEAAQSANESKNE.

Positions M1–P51 are disordered. Residues T13–P34 are compositionally biased toward polar residues. The span at A36–T48 shows a compositional bias: low complexity. S42 carries the phosphoserine modification. The short motif at L53–L57 is the Interaction with nuclear receptors element. The residue at position 63 (S63) is a Phosphoserine. A disordered region spans residues P64–T147. Residues A93 to N110 show a composition bias toward polar residues. S249 carries the phosphoserine modification. Residue K254 forms a Glycyl lysine isopeptide (Lys-Gly) (interchain with G-Cter in SUMO2) linkage. The tract at residues Q299–Q348 is disordered. Over residues A316–D329 the composition is skewed to polar residues. The Nuclear localization signal signature appears at P339 to R345. In terms of domain architecture, HTH psq-type spans R340 to T392. A Glycyl lysine isopeptide (Lys-Gly) (interchain with G-Cter in SUMO2) cross-link involves residue R345. The H-T-H motif DNA-binding region spans V368–E388. G391 is covalently cross-linked (Glycyl lysine isopeptide (Lys-Gly) (interchain with G-Cter in SUMO2)). Residues L393–S412 are disordered. A Glycyl lysine isopeptide (Lys-Gly) (interchain with G-Cter in SUMO2) cross-link involves residue K414.

Interacts with ESR1 and ESR2 in the presence of estradiol. Interacts with CTBP1, HDAC3 and HDAC6. Component of a large corepressor complex that contains about 20 proteins, including CTBP1, CTBP2, HDAC1 and HDAC2. In terms of tissue distribution, ubiquitous.

Its subcellular location is the nucleus. Functionally, may act as transcription activator that binds DNA elements with the sequence 5'-CCCTATCGATCGATCTCTACCT-3'. Repressor of ligand-dependent transcription activation by target nuclear receptors. Repressor of ligand-dependent transcription activation by ESR1, ESR2, NR3C1, PGR, RARA, RARB, RARG, RXRA and VDR. The polypeptide is Ligand-dependent corepressor (Homo sapiens (Human)).